We begin with the raw amino-acid sequence, 427 residues long: Enolase (427 aa).

Gln163 provides a ligand contact to (2R)-2-phosphoglycerate. Glu205 serves as the catalytic Proton donor. Mg(2+) contacts are provided by Asp242, Glu285, and Asp312. Lys337, Arg366, Ser367, and Lys388 together coordinate (2R)-2-phosphoglycerate. Lys337 acts as the Proton acceptor in catalysis.

Belongs to the enolase family. It depends on Mg(2+) as a cofactor.

The protein localises to the cytoplasm. The protein resides in the secreted. Its subcellular location is the cell surface. It catalyses the reaction (2R)-2-phosphoglycerate = phosphoenolpyruvate + H2O. The protein operates within carbohydrate degradation; glycolysis; pyruvate from D-glyceraldehyde 3-phosphate: step 4/5. Catalyzes the reversible conversion of 2-phosphoglycerate (2-PG) into phosphoenolpyruvate (PEP). It is essential for the degradation of carbohydrates via glycolysis. This chain is Enolase, found in Burkholderia ambifaria (strain MC40-6).